The chain runs to 324 residues: MSLYMLVSTFAVAFIITVIGVPLFIPFLVKLKFGQSIRDEGPKMHEKKSGTPTMGAVVFITAMLISFLIFSFISGEVSAATWLLFIALALFGALGFLDDYIKVVQKRNLGLTSKQKFLGQVAISILFYLVYHLNGFAETLNIPFTNIEVDLGWFFVIFILFWLVGFSNAVNLTDGLDGLVSGLSVIAFSAFGVIAFYQEQMDVAIFCFAIVGGMLGFLLFNKNPAKIFMGDTGSLALGGSIAAISILVHQEWLLLLIGIIFVIETASVILQVFYFKATGGKRIFRMTPIHHHFELGGWSEWRVVLTFWGIGLIGAIISVCVVIF.

The next 10 membrane-spanning stretches (helical) occupy residues 9 to 29 (TFAVAFIITVIGVPLFIPFLV), 53 to 73 (TMGAVVFITAMLISFLIFSFI), 77 to 97 (VSAATWLLFIALALFGALGFL), 117 to 137 (FLGQVAISILFYLVYHLNGFA), 147 to 167 (IEVDLGWFFVIFILFWLVGFS), 176 to 196 (LDGLVSGLSVIAFSAFGVIAF), 201 to 221 (MDVAIFCFAIVGGMLGFLLFN), 227 to 247 (IFMGDTGSLALGGSIAAISIL), 253 to 273 (LLLLIGIIFVIETASVILQVF), and 304 to 324 (VLTFWGIGLIGAIISVCVVIF).

Belongs to the glycosyltransferase 4 family. MraY subfamily. It depends on Mg(2+) as a cofactor.

The protein resides in the cell membrane. The catalysed reaction is UDP-N-acetyl-alpha-D-muramoyl-L-alanyl-gamma-D-glutamyl-meso-2,6-diaminopimeloyl-D-alanyl-D-alanine + di-trans,octa-cis-undecaprenyl phosphate = di-trans,octa-cis-undecaprenyl diphospho-N-acetyl-alpha-D-muramoyl-L-alanyl-D-glutamyl-meso-2,6-diaminopimeloyl-D-alanyl-D-alanine + UMP. The protein operates within cell wall biogenesis; peptidoglycan biosynthesis. Functionally, catalyzes the initial step of the lipid cycle reactions in the biosynthesis of the cell wall peptidoglycan: transfers peptidoglycan precursor phospho-MurNAc-pentapeptide from UDP-MurNAc-pentapeptide onto the lipid carrier undecaprenyl phosphate, yielding undecaprenyl-pyrophosphoryl-MurNAc-pentapeptide, known as lipid I. The polypeptide is Phospho-N-acetylmuramoyl-pentapeptide-transferase (Listeria monocytogenes serotype 4b (strain CLIP80459)).